We begin with the raw amino-acid sequence, 442 residues long: ATP-dependent protease ATPase subunit HslU (442 aa).

ATP is bound by residues Ile-18 and 60–65; that span reads GVGKTE. The disordered stretch occupies residues 137 to 156; sequence PKPKNDWESTETDSSSNTRQ. Asp-255, Glu-320, and Arg-392 together coordinate ATP.

It belongs to the ClpX chaperone family. HslU subfamily. As to quaternary structure, a double ring-shaped homohexamer of HslV is capped on each side by a ring-shaped HslU homohexamer. The assembly of the HslU/HslV complex is dependent on binding of ATP.

Its subcellular location is the cytoplasm. ATPase subunit of a proteasome-like degradation complex; this subunit has chaperone activity. The binding of ATP and its subsequent hydrolysis by HslU are essential for unfolding of protein substrates subsequently hydrolyzed by HslV. HslU recognizes the N-terminal part of its protein substrates and unfolds these before they are guided to HslV for hydrolysis. This is ATP-dependent protease ATPase subunit HslU from Shewanella baltica (strain OS155 / ATCC BAA-1091).